The sequence spans 383 residues: S-adenosylmethionine synthase (383 aa).

Position 15 (His-15) interacts with ATP. Asp-17 provides a ligand contact to Mg(2+). Glu-43 contributes to the K(+) binding site. Positions 56 and 99 each coordinate L-methionine. Residues 99 to 109 (QSPDINQGVDR) form a flexible loop region. Residues 164-166 (DAK), 230-231 (RF), Asp-239, 245-246 (RK), Ala-262, and Lys-266 each bind ATP. Asp-239 is an L-methionine binding site. Lys-270 provides a ligand contact to L-methionine.

The protein belongs to the AdoMet synthase family. As to quaternary structure, homotetramer; dimer of dimers. The cofactor is Mg(2+). It depends on K(+) as a cofactor.

The protein localises to the cytoplasm. It catalyses the reaction L-methionine + ATP + H2O = S-adenosyl-L-methionine + phosphate + diphosphate. It functions in the pathway amino-acid biosynthesis; S-adenosyl-L-methionine biosynthesis; S-adenosyl-L-methionine from L-methionine: step 1/1. Functionally, catalyzes the formation of S-adenosylmethionine (AdoMet) from methionine and ATP. The overall synthetic reaction is composed of two sequential steps, AdoMet formation and the subsequent tripolyphosphate hydrolysis which occurs prior to release of AdoMet from the enzyme. The chain is S-adenosylmethionine synthase from Shewanella denitrificans (strain OS217 / ATCC BAA-1090 / DSM 15013).